Reading from the N-terminus, the 596-residue chain is Merlin (596 aa).

Position 13 is a phosphoserine (S13). Residues 22 to 311 (FTVRIVTMDA…GNHDLFMRRR (290 aa)) form the FERM domain. S518 carries the post-translational modification Phosphoserine; by PAK. The tract at residues 560–580 (VLHSESSDRGGPSSKHNTIKK) is disordered.

As to quaternary structure, interacts with NHERF1, HGS and AGAP2. Interacts with SGSM3. Interacts (via FERM domain) with MPP1. Interacts with LAYN. Interacts with WWC1. Interacts with the CUL4A-RBX1-DDB1-VprBP/DCAF1 E3 ubiquitin-protein ligase complex. The unphosphorylated form interacts (via FERM domain) with VPRBP/DCAF1. Interacts (via FERM domain) with NOP53; the interaction is direct. Interacts with SCHIP1; the interaction is direct. Phosphorylation of Ser-518 inhibits nuclear localization by disrupting the intramolecular association of the FERM domain with the C-terminal tail. The dephosphorylation of Ser-518 favors the interaction with NOP53. Post-translationally, ubiquitinated by the CUL4A-RBX1-DDB1-DCAF1/VprBP E3 ubiquitin-protein ligase complex for ubiquitination and subsequent proteasome-dependent degradation.

The protein resides in the cell membrane. It localises to the cell projection. The protein localises to the cytoplasm. It is found in the cytoskeleton. Its subcellular location is the nucleus. In terms of biological role, probable regulator of the Hippo/SWH (Sav/Wts/Hpo) signaling pathway, a signaling pathway that plays a pivotal role in tumor suppression by restricting proliferation and promoting apoptosis. Along with WWC1 can synergistically induce the phosphorylation of LATS1 and LATS2 and can probably function in the regulation of the Hippo/SWH (Sav/Wts/Hpo) signaling pathway. May act as a membrane stabilizing protein. May inhibit PI3 kinase by binding to AGAP2 and impairing its stimulating activity. Suppresses cell proliferation and tumorigenesis by inhibiting the CUL4A-RBX1-DDB1-VprBP/DCAF1 E3 ubiquitin-protein ligase complex. Plays a role in lens development and is required for complete fiber cell terminal differentiation, maintenance of cell polarity and separation of the lens vesicle from the corneal epithelium. The sequence is that of Merlin (Nf2) from Mus musculus (Mouse).